The sequence spans 585 residues: DNA ligase (585 aa).

ATP is bound at residue E278. K280 (N6-AMP-lysine intermediate) is an active-site residue. Positions 285, 301, 330, 370, 444, and 450 each coordinate ATP.

Belongs to the ATP-dependent DNA ligase family. Mg(2+) is required as a cofactor.

It carries out the reaction ATP + (deoxyribonucleotide)n-3'-hydroxyl + 5'-phospho-(deoxyribonucleotide)m = (deoxyribonucleotide)n+m + AMP + diphosphate.. Functionally, DNA ligase that seals nicks in double-stranded DNA during DNA replication, DNA recombination and DNA repair. This is DNA ligase from Haloferax volcanii (strain ATCC 29605 / DSM 3757 / JCM 8879 / NBRC 14742 / NCIMB 2012 / VKM B-1768 / DS2) (Halobacterium volcanii).